Here is a 313-residue protein sequence, read N- to C-terminus: E3 ubiquitin-protein ligase RNF126 (313 aa).

Ala2 carries the post-translational modification N-acetylalanine. Ser5 is modified (phosphoserine). The required for interaction with BAG6 stretch occupies residues 5 to 100 (SPQPGRYFCH…FEIPTFPPGA (96 aa)). Cys13, Cys16, Cys29, and Cys32 together coordinate Zn(2+). Residues 13 to 32 (CHCCSVEIVPRLPDYICPRC) form a C4-type zinc finger. Disordered regions lie at residues 42 to 63 (EETR…QNRQ) and 95 to 128 (TFPP…RQPR). The segment covering 47–63 (TENGSAPSTAPTDQNRQ) has biased composition (polar residues). Residues 103–116 (DDGRDPESRREREH) show a composition bias toward basic and acidic residues. A compositionally biased stretch (basic residues) spans 117-128 (QSRHRYGARQPR). Residues 202–306 (TGPPPADKEK…SSSSSSSPSN (105 aa)) are sufficient for interaction with AICDA. An RING-type zinc finger spans residues 231–272 (CPVCKEDYALGESVRQLPCNHLFHDSCIVPWLEQHDSCPVCR). Residues 279–313 (NTATNPPGLTGVGFSSSSSSSSSSSPSNENATSNS) form a disordered region. A compositionally biased stretch (low complexity) spans 293-313 (SSSSSSSSSSSPSNENATSNS).

In terms of assembly, interacts with CCDC50, EGFR, FLT3 and SCAMP3. Interacts with BAG6 (via ubiquitin-like domain); required for BAG6-dependent ubiquitination of proteins mislocalized to the cytosol. Interacts with CDKN1A. Interacts with AICDA. Post-translationally, ubiquitinated. May undergo autoubiquitination. Detected in B-cells (at protein level).

It is found in the cytoplasm. It localises to the nucleus. It catalyses the reaction S-ubiquitinyl-[E2 ubiquitin-conjugating enzyme]-L-cysteine + [acceptor protein]-L-lysine = [E2 ubiquitin-conjugating enzyme]-L-cysteine + N(6)-ubiquitinyl-[acceptor protein]-L-lysine.. It participates in protein modification; protein ubiquitination. Functionally, E3 ubiquitin-protein ligase that mediates ubiquitination oF target proteins. Depending on the associated E2 ligase, mediates 'Lys-27'-, 'Lys-29'-, 'Lys-48'- and/or 'Lys-63'-linked polyubiquitination of substrates. Part of a BAG6-dependent quality control process ensuring that proteins of the secretory pathway that are mislocalized to the cytosol are degraded by the proteasome. Probably acts by providing the ubiquitin ligase activity associated with the BAG6 complex and be responsible for ubiquitination of the hydrophobic mislocalized proteins and their targeting to the proteasome. May also play a role in the endosomal recycling of IGF2R, the cation-independent mannose-6-phosphate receptor. May play a role in the endosomal sorting and degradation of several membrane receptors including EGFR, FLT3, MET and CXCR4, by mediating their ubiquitination. By ubiquitinating CDKN1A/p21 and targeting it for degradation, may also promote cell proliferation. May monoubiquitinate AICDA. Acts as a regulator of DNA repair by mediating 'Lys-27'- and 'Lys-29'-linked polyubiquitination of MRE11, thereby promoting the exonuclease activity of MRE11. The chain is E3 ubiquitin-protein ligase RNF126 from Mus musculus (Mouse).